The sequence spans 251 residues: Cell division protein ZapD (251 aa).

Belongs to the ZapD family. In terms of assembly, interacts with FtsZ.

The protein localises to the cytoplasm. In terms of biological role, cell division factor that enhances FtsZ-ring assembly. Directly interacts with FtsZ and promotes bundling of FtsZ protofilaments, with a reduction in FtsZ GTPase activity. The chain is Cell division protein ZapD from Azoarcus sp. (strain BH72).